The sequence spans 1241 residues: Nephrin (1241 aa).

Positions 1–22 are cleaved as a signal peptide; sequence MALGTTLRASLLLLGLLTEGLA. The Extracellular segment spans residues 23-1055; sequence QLAIPASVPR…EDQLPTEPPS (1033 aa). Ig-like C2-type domains follow at residues 27–130, 143–234, 242–333, 340–434, 440–540, and 544–635; these read PASV…VILS, EAGT…SFTV, PPVI…HGIT, PSAI…KSLI, PAQK…TQLA, and PPTN…ETVS. N-linked (GlcNAc...) asparagine glycosylation occurs at N40. Disulfide bonds link C53/C111, C160/C217, and C265/C317. 2 N-linked (GlcNAc...) asparagine glycosylation sites follow: N356 and N401. Residues C361 and C417 are joined by a disulfide bond. The residue at position 432 (S432) is a Phosphoserine. C465 and C528 are joined by a disulfide. Residues N547, N553, N564, N577, N680, and N708 are each glycosylated (N-linked (GlcNAc...) asparagine). The cysteines at positions 567 and 623 are disulfide-linked. 2 consecutive Ig-like C2-type domains span residues 740 to 832 and 838 to 939; these read PTIR…LLRL and PQVE…VSIS. 2 disulfide bridges follow: C761–C816 and C863–C920. N908 carries N-linked (GlcNAc...) asparagine glycosylation. Positions 943–1038 constitute a Fibronectin type-III domain; that stretch reads PPSGLKVVSL…TQLPITTPGL (96 aa). The segment at 1025–1057 is disordered; it reads ADKGTQLPITTPGLHQPSGEPEDQLPTEPPSGP. The helical transmembrane segment at 1056–1076 threads the bilayer; sequence GPSGLPLLPVLFALGGLLLLS. The Cytoplasmic portion of the chain corresponds to 1077–1241; sequence NASCVGGVLW…LPFELRGHLV (165 aa). A Phosphoserine modification is found at S1098. Over residues 1099–1114 the composition is skewed to basic and acidic residues; it reads EKTEAGSEEDRVRNEY. The disordered stretch occupies residues 1099 to 1137; sequence EKTEAGSEEDRVRNEYEESQWTGERDTQSSTVSTTEAEP. Phosphothreonine is present on T1101. S1105 carries the phosphoserine modification. The interval 1160–1241 is binds to NPHS2; it reads RGFTGEDEDM…LPFELRGHLV (82 aa). Phosphotyrosine; by FYN is present on Y1193.

It belongs to the immunoglobulin superfamily. As to quaternary structure, interacts with CD2AP (via C-terminal domain). Interacts with MAGI1 (via PDZ 2 and 3 domains) forming a tripartite complex with IGSF5/JAM4. Interacts with DDN; the interaction is direct. Self-associates (via the Ig-like domains). Also interacts (via the Ig-like domains) with KIRREL1/NEPH1 and KIRREL2; the interaction with KIRREL1 is dependent on KIRREL1 glycosylation. Interacts with KIRREL3. Forms a complex with ACTN4, CASK, IQGAP1, MAGI2, SPTAN1 and SPTBN1. Interacts with NPHS2. Interacts with phosphatidylinositol 3-kinase regulatory subunit PIK3R1; the interaction is reduced by high glucose levels. Post-translationally, phosphorylated at Tyr-1193 by FYN, leading to the recruitment and activation of phospholipase C-gamma-1/PLCG1. Tyrosine phosphorylation is reduced by high glucose levels. Dephosphorylated by tensin TNS2 which leads to reduced binding of NPHN1 to PIK3R1. Specifically expressed in podocytes of kidney glomeruli.

The protein resides in the cell membrane. Seems to play a role in the development or function of the kidney glomerular filtration barrier. Regulates glomerular vascular permeability. May anchor the podocyte slit diaphragm to the actin cytoskeleton. Plays a role in skeletal muscle formation through regulation of myoblast fusion. This Homo sapiens (Human) protein is Nephrin (NPHS1).